We begin with the raw amino-acid sequence, 220 residues long: Deoxyribose-phosphate aldolase (220 aa).

Catalysis depends on D89, which acts as the Proton donor/acceptor. K151 serves as the catalytic Schiff-base intermediate with acetaldehyde. The Proton donor/acceptor role is filled by K180.

The protein belongs to the DeoC/FbaB aldolase family. DeoC type 1 subfamily.

It localises to the cytoplasm. It catalyses the reaction 2-deoxy-D-ribose 5-phosphate = D-glyceraldehyde 3-phosphate + acetaldehyde. It participates in carbohydrate degradation; 2-deoxy-D-ribose 1-phosphate degradation; D-glyceraldehyde 3-phosphate and acetaldehyde from 2-deoxy-alpha-D-ribose 1-phosphate: step 2/2. Functionally, catalyzes a reversible aldol reaction between acetaldehyde and D-glyceraldehyde 3-phosphate to generate 2-deoxy-D-ribose 5-phosphate. This is Deoxyribose-phosphate aldolase from Staphylococcus carnosus (strain TM300).